Consider the following 398-residue polypeptide: Phosphoglycerate kinase (398 aa).

Residues 23–25 (DFN), Arg38, 61–64 (HLGK), Arg122, and Arg155 contribute to the substrate site. ATP contacts are provided by residues Lys206, Gly297, Glu328, and 354–357 (GGDS).

This sequence belongs to the phosphoglycerate kinase family. As to quaternary structure, monomer.

Its subcellular location is the cytoplasm. It catalyses the reaction (2R)-3-phosphoglycerate + ATP = (2R)-3-phospho-glyceroyl phosphate + ADP. It functions in the pathway carbohydrate degradation; glycolysis; pyruvate from D-glyceraldehyde 3-phosphate: step 2/5. In Clostridium kluyveri (strain NBRC 12016), this protein is Phosphoglycerate kinase.